A 1018-amino-acid polypeptide reads, in one-letter code: Probable inorganic carbon transporter subunit DabA 2 (1018 aa).

Residues Cys489, Asp491, His674, and Cys689 each coordinate Zn(2+).

Belongs to the inorganic carbon transporter (TC 9.A.2) DabA family. Forms a complex with DabB. The cofactor is Zn(2+).

It is found in the cell inner membrane. Part of an energy-coupled inorganic carbon pump. The protein is Probable inorganic carbon transporter subunit DabA 2 of Sorangium cellulosum (strain So ce56) (Polyangium cellulosum (strain So ce56)).